Reading from the N-terminus, the 407-residue chain is Schlafen-like protein 1 (407 aa).

Disordered regions lie at residues 1–28 (MTPM…LPEL) and 137–191 (AQGP…CQGR). Low complexity predominate over residues 155–167 (GLSPGPSPGSGVP). Polar residues predominate over residues 181–190 (QAQQLQSCQG). Residue 261–268 (GVEDSGLV) coordinates ATP. Positions 366-398 (RQRWLVELGKLEEKMKALMMEKEQLQQQLQQHG) form a coiled coil.

This sequence belongs to the Schlafen family. Subgroup I subfamily.

The protein is Schlafen-like protein 1 (SLFNL1) of Homo sapiens (Human).